The following is a 481-amino-acid chain: Arf-GAP domain and FG repeat-containing protein 2 (481 aa).

An Arf-GAP domain is found at 27–153 (EVWCRRVREL…WYVPPDQVKG (127 aa)). The C4-type zinc-finger motif lies at 47-70 (CFECAQRGVTYVDITVGSFVCTTC). Disordered stretches follow at residues 150–220 (QVKG…SVKK), 271–309 (SSVF…APAS), and 431–481 (QQNG…NPFL). Residues 157–166 (TKGSASTPVQ) show a composition bias toward polar residues. At lysine 173 the chain carries N6-acetyllysine. Composition is skewed to polar residues over residues 188–210 (VAAS…ARST), 283–298 (ASFQ…SQGT), and 454–481 (AGIS…NPFL).

In terms of assembly, interacts with EPS15R.

In Homo sapiens (Human), this protein is Arf-GAP domain and FG repeat-containing protein 2 (AGFG2).